An 83-amino-acid chain; its full sequence is High-potential iron-sulfur protein (83 aa).

[4Fe-4S] cluster contacts are provided by Cys-43, Cys-46, Cys-61, and Cys-75.

The protein belongs to the high-potential iron-sulfur protein (HiPIP) family. As to quaternary structure, homodimer.

The protein localises to the periplasm. Its function is as follows. Specific class of high-redox-potential 4Fe-4S ferredoxins. Functions in anaerobic electron transport in most purple and in some other photosynthetic bacteria and in at least one genus (Paracoccus) of halophilic, denitrifying bacteria. This chain is High-potential iron-sulfur protein, found in Thiocystis violacea.